Here is a 237-residue protein sequence, read N- to C-terminus: Ribonuclease PH (237 aa).

Phosphate is bound by residues R86 and 124 to 126 (GTR).

Belongs to the RNase PH family. As to quaternary structure, homohexameric ring arranged as a trimer of dimers.

It catalyses the reaction tRNA(n+1) + phosphate = tRNA(n) + a ribonucleoside 5'-diphosphate. Functionally, phosphorolytic 3'-5' exoribonuclease that plays an important role in tRNA 3'-end maturation. Removes nucleotide residues following the 3'-CCA terminus of tRNAs; can also add nucleotides to the ends of RNA molecules by using nucleoside diphosphates as substrates, but this may not be physiologically important. Probably plays a role in initiation of 16S rRNA degradation (leading to ribosome degradation) during starvation. The chain is Ribonuclease PH from Tolumonas auensis (strain DSM 9187 / NBRC 110442 / TA 4).